The sequence spans 234 residues: Leucyl/phenylalanyl-tRNA--protein transferase (234 aa).

It belongs to the L/F-transferase family.

Its subcellular location is the cytoplasm. It carries out the reaction N-terminal L-lysyl-[protein] + L-leucyl-tRNA(Leu) = N-terminal L-leucyl-L-lysyl-[protein] + tRNA(Leu) + H(+). It catalyses the reaction N-terminal L-arginyl-[protein] + L-leucyl-tRNA(Leu) = N-terminal L-leucyl-L-arginyl-[protein] + tRNA(Leu) + H(+). The catalysed reaction is L-phenylalanyl-tRNA(Phe) + an N-terminal L-alpha-aminoacyl-[protein] = an N-terminal L-phenylalanyl-L-alpha-aminoacyl-[protein] + tRNA(Phe). Functions in the N-end rule pathway of protein degradation where it conjugates Leu, Phe and, less efficiently, Met from aminoacyl-tRNAs to the N-termini of proteins containing an N-terminal arginine or lysine. This Escherichia coli O81 (strain ED1a) protein is Leucyl/phenylalanyl-tRNA--protein transferase.